A 439-amino-acid chain; its full sequence is (p)ppApp synthetase toxin Tas1 (439 aa).

The protein localises to the secreted. It carries out the reaction AMP + ATP = adenosine 3'-diphosphate,5'-phosphate + AMP + H(+). It catalyses the reaction ADP + ATP = adenosine 3'-diphosphate,5'-diphosphate + AMP. The catalysed reaction is 2 ATP = adenosine 3'-diphosphate,5'-triphosphate + AMP. Its function is as follows. Type VI secretion exported toxin that pyrophosphorylates adenosine nucleotides to produce (p)ppApp. Thereby, depletes cellular ADP and ATP to dysregulate central metabolism in competitor cells. The polypeptide is (p)ppApp synthetase toxin Tas1 (tas1) (Pseudomonas aeruginosa (strain UCBPP-PA14)).